A 1106-amino-acid polypeptide reads, in one-letter code: Protein kinase C (1106 aa).

The REM-1 1 domain occupies Met1–Lys67. The disordered stretch occupies residues Gln65–Ala138. Pro residues predominate over residues Pro79–Asp93. One can recognise an REM-1 2 domain in the interval Lys149–Asp226. Residues Ala232–Phe350 form the C2 domain. Over residues Met361 to Gln370 the composition is skewed to basic and acidic residues. The segment at Met361 to Pro400 is disordered. A compositionally biased stretch (gly residues) spans Gly386–Pro400. 2 consecutive Phorbol-ester/DAG-type zinc fingers follow at residues Gly460–Cys508 and Pro528–Cys578. 2 stretches are compositionally biased toward polar residues: residues Lys600 to Ser609 and Tyr658 to Gln668. 2 disordered regions span residues Lys600–Asn625 and Tyr658–Tyr719. Residues Ala683–Ala693 show a composition bias toward low complexity. The 260-residue stretch at Phe781 to Phe1040 folds into the Protein kinase domain. ATP contacts are provided by residues Leu787 to Val795 and Lys810. Asp906 functions as the Proton acceptor in the catalytic mechanism. The AGC-kinase C-terminal domain occupies Arg1041–Ala1106. Thr1082 is modified (phosphothreonine). Ser1100 is subject to Phosphoserine. Tyr1101 is modified (phosphotyrosine).

The protein belongs to the protein kinase superfamily. AGC Ser/Thr protein kinase family. PKC subfamily. Interacts with hsp90.

The enzyme catalyses L-seryl-[protein] + ATP = O-phospho-L-seryl-[protein] + ADP + H(+). The catalysed reaction is L-threonyl-[protein] + ATP = O-phospho-L-threonyl-[protein] + ADP + H(+). Functionally, protein kinase C; part of cell wall integrity (CWI) signaling pathway composed of pkcA, the bck1-mkk2-mpka MAPK cascade and the downstream rlmA transcription regulator. The CWI signaling pathway regulates cell wall integrity and pyomelanin formation. CWI also controls oxidative stress response, gliotoxin production, iron adaptation and asexual development. Finally, CWI is constitutively required for A.fumigatus to cope with the temperature increase found in the mammalian lung environment, during infection. Modulates the expression of fumiquinazoline cluster during conidiogenesis. The sequence is that of Protein kinase C from Aspergillus fumigatus (strain ATCC MYA-4609 / CBS 101355 / FGSC A1100 / Af293) (Neosartorya fumigata).